The following is a 168-amino-acid chain: Protein-export protein SecB (168 aa).

This sequence belongs to the SecB family. In terms of assembly, homotetramer, a dimer of dimers. One homotetramer interacts with 1 SecA dimer.

The protein resides in the cytoplasm. In terms of biological role, one of the proteins required for the normal export of preproteins out of the cell cytoplasm. It is a molecular chaperone that binds to a subset of precursor proteins, maintaining them in a translocation-competent state. It also specifically binds to its receptor SecA. The sequence is that of Protein-export protein SecB from Haemophilus influenzae (strain PittGG).